A 154-amino-acid polypeptide reads, in one-letter code: Deoxyuridine 5'-triphosphate nucleotidohydrolase (154 aa).

Substrate-binding positions include R64 to G66, N77, T81 to D83, and K91.

This sequence belongs to the dUTPase family. Homotrimer. Mg(2+) is required as a cofactor.

It catalyses the reaction dUTP + H2O = dUMP + diphosphate + H(+). The protein operates within pyrimidine metabolism; dUMP biosynthesis; dUMP from dCTP (dUTP route): step 2/2. This enzyme is involved in nucleotide metabolism: it produces dUMP, the immediate precursor of thymidine nucleotides and it decreases the intracellular concentration of dUTP so that uracil cannot be incorporated into DNA. This Mycolicibacterium gilvum (strain PYR-GCK) (Mycobacterium gilvum (strain PYR-GCK)) protein is Deoxyuridine 5'-triphosphate nucleotidohydrolase.